A 143-amino-acid chain; its full sequence is Large ribosomal subunit protein uL15 (143 aa).

A disordered region spans residues 1-52 (MKLNTLAPAAGSKSAPKRLGRGIGSGLGKTSGKGHKGQKARSGGYHKVGFEG). Residues 21-31 (RGIGSGLGKTS) are compositionally biased toward gly residues.

It belongs to the universal ribosomal protein uL15 family. As to quaternary structure, part of the 50S ribosomal subunit.

Binds to the 23S rRNA. The sequence is that of Large ribosomal subunit protein uL15 from Francisella tularensis subsp. novicida (strain U112).